A 336-amino-acid chain; its full sequence is MSFNLHNRNLLSLIHHNARELRYLLDLARDLKRAKYSGTEQPRLLRKNIALIFEKTSTRTRCAFEVAAYDQGANVTYIDPASSQIGHKESMRDTARVLGRMYDAIEYRGFSQEIVEELAHHAGVPVFNGLTDEYHPTQMLADVMTMREHSDKPLHDIRYAYLGDARNNMGNSLLLIGAKLGMDVRIGAPKSLWPAADFIAQCEAFAAESGARLTLTEDPYEAVKGVDFIHTDVWVSMGEPVEAWDERINALLPYQVNRKLIESTGNPRTRFMHCLPSFHNCETKVGKQIAERYPHLQDGIEVTDEVFESPRCIAFEQAENRMHTIKAVLVSTLGGI.

Residues 57–60 (STRT), glutamine 84, arginine 108, and 135–138 (HPTQ) each bind carbamoyl phosphate. L-ornithine is bound by residues asparagine 168, aspartate 232, and 236–237 (SM). Carbamoyl phosphate contacts are provided by residues 274-275 (CL) and arginine 321.

This sequence belongs to the aspartate/ornithine carbamoyltransferase superfamily. OTCase family.

The protein localises to the cytoplasm. The enzyme catalyses carbamoyl phosphate + L-ornithine = L-citrulline + phosphate + H(+). The protein operates within amino-acid degradation; L-arginine degradation via ADI pathway; carbamoyl phosphate from L-arginine: step 2/2. Functionally, reversibly catalyzes the transfer of the carbamoyl group from carbamoyl phosphate (CP) to the N(epsilon) atom of ornithine (ORN) to produce L-citrulline. In Burkholderia mallei (strain ATCC 23344), this protein is Ornithine carbamoyltransferase, catabolic.